A 248-amino-acid polypeptide reads, in one-letter code: Mannose-binding protein C (248 aa).

Positions 1 to 20 (MSLFPSLTLLLLSVVATSYS) are cleaved as a signal peptide. One can recognise a Collagen-like domain in the interval 42 to 99 (GINGFPGKDGRDGTKGEKGEPGQGLRGLQGPPGKLGPPGNPGSSGSPGPKGQKGDPGE). The interval 43–113 (INGFPGKDGR…DSSLAASERK (71 aa)) is disordered. The residue at position 47 (proline 47) is a 4-hydroxyproline. A compositionally biased stretch (basic and acidic residues) spans 49-61 (KDGRDGTKGEKGE). A 4-hydroxyproline mark is found at proline 73, proline 79, proline 82, and proline 88. The span at 82-91 (PGSSGSPGPK) shows a compositional bias: low complexity. Residues 112 to 130 (RKALQTEMARIKKWLTFSL) are a coiled coil. The C-type lectin domain maps to 134–245 (VGNKFFLTNG…CSSSHLALCE (112 aa)). Cystine bridges form between cysteine 155–cysteine 244 and cysteine 222–cysteine 236.

In terms of assembly, oligomeric complex of 3 or more homotrimers. Interacts with MASP1 and MASP2. Interacts with MEP1A and MEP1B and may inhibit their catalytic activity. Hydroxylation on proline residues within the sequence motif, GXPG, is most likely to be 4-hydroxy as this fits the requirement for 4-hydroxylation in vertebrates.

Its subcellular location is the secreted. Functionally, calcium-dependent lectin involved in innate immune defense. Binds mannose, fucose and N-acetylglucosamine on different microorganisms and activates the lectin complement pathway. Binds to late apoptotic cells, as well as to apoptotic blebs and to necrotic cells, but not to early apoptotic cells, facilitating their uptake by macrophages. This Chlorocebus aethiops (Green monkey) protein is Mannose-binding protein C (MBL2).